The primary structure comprises 125 residues: MSKPKAPRRVGDKEALSVGTQIRGSAQKLNLVAGLIRGKRAEDAMNILAFSKKAMAVDARKVLASAIANAENNHNLDVDALVVAEASVGKSITMKRFHTRGRGKSTRILKPFSRLRIVVREVEEA.

The protein belongs to the universal ribosomal protein uL22 family. Part of the 50S ribosomal subunit.

This protein binds specifically to 23S rRNA; its binding is stimulated by other ribosomal proteins, e.g. L4, L17, and L20. It is important during the early stages of 50S assembly. It makes multiple contacts with different domains of the 23S rRNA in the assembled 50S subunit and ribosome. In terms of biological role, the globular domain of the protein is located near the polypeptide exit tunnel on the outside of the subunit, while an extended beta-hairpin is found that lines the wall of the exit tunnel in the center of the 70S ribosome. This Novosphingobium aromaticivorans (strain ATCC 700278 / DSM 12444 / CCUG 56034 / CIP 105152 / NBRC 16084 / F199) protein is Large ribosomal subunit protein uL22.